The following is a 58-amino-acid chain: Large ribosomal subunit protein bL32 (58 aa).

The protein belongs to the bacterial ribosomal protein bL32 family.

The protein is Large ribosomal subunit protein bL32 of Anaplasma marginale (strain Florida).